The chain runs to 345 residues: L-threonine 3-dehydrogenase (345 aa).

Cys38 contacts Zn(2+). Active-site charge relay system residues include Thr40 and His43. The Zn(2+) site is built by His63, Glu64, Cys93, Cys96, Cys99, and Cys107. Residues Ile176, Asp196, Arg201, 263–265, and 287–288 contribute to the NAD(+) site; these read LGT and VT.

Belongs to the zinc-containing alcohol dehydrogenase family. Homotetramer. The cofactor is Zn(2+).

The protein localises to the cytoplasm. It catalyses the reaction L-threonine + NAD(+) = (2S)-2-amino-3-oxobutanoate + NADH + H(+). It functions in the pathway amino-acid degradation; L-threonine degradation via oxydo-reductase pathway; glycine from L-threonine: step 1/2. Functionally, catalyzes the NAD(+)-dependent oxidation of L-threonine to 2-amino-3-ketobutyrate. In Cutibacterium acnes (strain DSM 16379 / KPA171202) (Propionibacterium acnes), this protein is L-threonine 3-dehydrogenase.